The sequence spans 254 residues: Hydroxyacylglutathione hydrolase (254 aa).

Residues H52, H54, D56, H57, H109, D126, and H164 each contribute to the Zn(2+) site.

The protein belongs to the metallo-beta-lactamase superfamily. Glyoxalase II family. Monomer. Zn(2+) serves as cofactor.

The catalysed reaction is an S-(2-hydroxyacyl)glutathione + H2O = a 2-hydroxy carboxylate + glutathione + H(+). It functions in the pathway secondary metabolite metabolism; methylglyoxal degradation; (R)-lactate from methylglyoxal: step 2/2. In terms of biological role, thiolesterase that catalyzes the hydrolysis of S-D-lactoyl-glutathione to form glutathione and D-lactic acid. This chain is Hydroxyacylglutathione hydrolase, found in Stenotrophomonas maltophilia (strain R551-3).